Here is a 1062-residue protein sequence, read N- to C-terminus: 3-hydroxy-3-methylglutaryl-coenzyme A reductase 2 (1062 aa).

Over 1 to 34 (MAPTNTKDSDTPGWLHRHGTSVLGSVARQACKQP) the chain is Cytoplasmic. Residues 35-55 (IYTLVITALLATMTYTSLLEG) form a helical membrane-spanning segment. Topologically, residues 56 to 230 (SLYNANLTRL…SFVGLIKHAQ (175 aa)) are lumenal. Asn61 carries N-linked (GlcNAc...) asparagine glycosylation. The helical transmembrane segment at 231-251 (IIDIIIMLLAYLAMHLTFLSL) threads the bilayer. Positions 233 to 403 (DIIIMLLAYL…FTFYISVLCV (171 aa)) constitute an SSD domain. At 252-261 (FMSMRQLGSR) the chain is on the cytoplasmic side. A helical transmembrane segment spans residues 262 to 282 (FWLAYSVLLSGFFSLFFGLKV). Topologically, residues 283–287 (TTSSG) are lumenal. The helical transmembrane segment at 288–308 (VSTSMITLSECLPILVIIVGF) threads the bilayer. The Cytoplasmic portion of the chain corresponds to 309-355 (EKPIRLTRAVLRAATESYLPAKPMARRSTPEAIEVAIMREGWRIVRD). A helical membrane pass occupies residues 356-375 (YAIEIAILAAGATSRVQGAL). At 376–377 (PQ) the chain is on the lumenal side. The chain crosses the membrane as a helical span at residues 378–398 (FCFLAAWILLFDSLLLFTFYI). Residues 399 to 450 (SVLCVKLEITRIRKHVEPRRALEDDDISTGNQDFDSRVFGCKVKAANISRFK) lie on the Cytoplasmic side of the membrane. Residues 451–471 (FLMVGGFVLFNVLQLSSLTYG) traverse the membrane as a helical segment. Residues 472–564 (NVRVSDWMPY…GCVLAWLEDP (93 aa)) lie on the Lumenal side of the membrane. An N-linked (GlcNAc...) asparagine glycan is attached at Asn484. A helical membrane pass occupies residues 565–585 (VISKWVIAALFLSLVLNSYLM). The Cytoplasmic segment spans residues 586-1062 (KAARWNLRQS…NRSKVAAKTG (477 aa)). Catalysis depends on Glu744, which acts as the Charge relay system. 750-756 (SASRGCK) provides a ligand contact to CoA. NADP(+)-binding positions include 811 to 813 (SRF) and 838 to 846 (DAMGMNMIS). The active-site Charge relay system is Lys877. 906 to 908 (VLK) is a CoA binding site. The active-site Charge relay system is the Asp953. Residue 1048 to 1049 (AH) participates in CoA binding. Catalysis depends on His1049, which acts as the Proton donor. 1053–1054 (NR) is an NADP(+) binding site.

It belongs to the HMG-CoA reductase family.

It localises to the endoplasmic reticulum membrane. The catalysed reaction is (R)-mevalonate + 2 NADP(+) + CoA = (3S)-3-hydroxy-3-methylglutaryl-CoA + 2 NADPH + 2 H(+). Its pathway is metabolic intermediate biosynthesis; (R)-mevalonate biosynthesis; (R)-mevalonate from acetyl-CoA: step 3/3. HMG-CoA reductase; part of the first module of ergosterol biosynthesis pathway that includes the early steps of the pathway, conserved across all eukaryotes, and which results in the formation of mevalonate from acetyl-coenzyme A (acetyl-CoA). Hmg1 and hmg2 catalyze the reduction of hydroxymethylglutaryl-CoA (HMG-CoA) to mevalonate. The first module starts with the action of the cytosolic acetyl-CoA acetyltransferase erg10B that catalyzes the formation of acetoacetyl-CoA. The hydroxymethylglutaryl-CoA synthases erg13A and erg13B then condense acetyl-CoA with acetoacetyl-CoA to form HMG-CoA. The rate-limiting step of the early module is the reduction to mevalonate by the 3-hydroxy-3-methylglutaryl-coenzyme A (HMG-CoA) reductases hmg1 and hmg2. Mevalonate is also a precursor for the extracellular siderophore triacetylfusarinine C (TAFC). The chain is 3-hydroxy-3-methylglutaryl-coenzyme A reductase 2 from Aspergillus fumigatus (strain ATCC MYA-4609 / CBS 101355 / FGSC A1100 / Af293) (Neosartorya fumigata).